Reading from the N-terminus, the 272-residue chain is Diaminopimelate epimerase (272 aa).

Asparagine 11 and asparagine 63 together coordinate substrate. The Proton donor role is filled by cysteine 72. Residues 73-74, asparagine 190, and 208-209 contribute to the substrate site; these read GN and ER. The Proton acceptor role is filled by cysteine 217. 218–219 is a substrate binding site; sequence GT.

It belongs to the diaminopimelate epimerase family. In terms of assembly, homodimer.

The protein resides in the cytoplasm. The enzyme catalyses (2S,6S)-2,6-diaminopimelate = meso-2,6-diaminopimelate. It participates in amino-acid biosynthesis; L-lysine biosynthesis via DAP pathway; DL-2,6-diaminopimelate from LL-2,6-diaminopimelate: step 1/1. In terms of biological role, catalyzes the stereoinversion of LL-2,6-diaminopimelate (L,L-DAP) to meso-diaminopimelate (meso-DAP), a precursor of L-lysine and an essential component of the bacterial peptidoglycan. The sequence is that of Diaminopimelate epimerase from Clostridium perfringens (strain 13 / Type A).